Consider the following 90-residue polypeptide: Phosphocarrier protein HPr (90 aa).

An HPr domain is found at 1 to 89; it reads MPAREITIIN…ELINNFFDEG (89 aa). Residue histidine 15 is the Pros-phosphohistidine intermediate of the active site.

This sequence belongs to the HPr family.

Its subcellular location is the cytoplasm. Its function is as follows. General (non sugar-specific) component of the phosphoenolpyruvate-dependent sugar phosphotransferase system (sugar PTS). This major carbohydrate active-transport system catalyzes the phosphorylation of incoming sugar substrates concomitantly with their translocation across the cell membrane. The phosphoryl group from phosphoenolpyruvate (PEP) is transferred to the phosphoryl carrier protein HPr by enzyme I. Phospho-HPr then transfers it to the PTS EIIA domain. In Pseudomonas putida (Arthrobacter siderocapsulatus), this protein is Phosphocarrier protein HPr (ptsH).